Consider the following 135-residue polypeptide: uncharacterized protein (135 aa).

The interval 56-135 (VQSHNRGINN…QKGQLKIEKV (80 aa)) is disordered. The segment covering 64–74 (NNRRRDQKRKQ) has biased composition (basic residues). A compositionally biased stretch (polar residues) spans 77–89 (SIKQDNDLNVSSE). The span at 108-135 (YKETPDLDEPGSREKRVSQKGQLKIEKV) shows a compositional bias: basic and acidic residues.

This is an uncharacterized protein from Schizosaccharomyces pombe (strain 972 / ATCC 24843) (Fission yeast).